The following is a 793-amino-acid chain: DNA mismatch repair protein MutS (793 aa).

589-596 (GPNMSGKS) is an ATP binding site.

Belongs to the DNA mismatch repair MutS family.

Its function is as follows. This protein is involved in the repair of mismatches in DNA. It is possible that it carries out the mismatch recognition step. This protein has a weak ATPase activity. This is DNA mismatch repair protein MutS from Thermotoga sp. (strain RQ2).